Consider the following 441-residue polypeptide: Ribulose bisphosphate carboxylase large chain (441 aa).

The residue at position 4 (lysine 4) is an N6,N6,N6-trimethyllysine. Positions 113 and 163 each coordinate substrate. Lysine 165 (proton acceptor) is an active-site residue. Lysine 167 contacts substrate. Mg(2+)-binding residues include lysine 191, aspartate 193, and glutamate 194. Residue lysine 191 is modified to N6-carboxylysine. Histidine 284 functions as the Proton acceptor in the catalytic mechanism. 3 residues coordinate substrate: arginine 285, histidine 317, and serine 369.

The protein belongs to the RuBisCO large chain family. Type I subfamily. Heterohexadecamer of 8 large chains and 8 small chains; disulfide-linked. The disulfide link is formed within the large subunit homodimers. It depends on Mg(2+) as a cofactor. The disulfide bond which can form in the large chain dimeric partners within the hexadecamer appears to be associated with oxidative stress and protein turnover.

Its subcellular location is the plastid. It is found in the chloroplast. It carries out the reaction 2 (2R)-3-phosphoglycerate + 2 H(+) = D-ribulose 1,5-bisphosphate + CO2 + H2O. It catalyses the reaction D-ribulose 1,5-bisphosphate + O2 = 2-phosphoglycolate + (2R)-3-phosphoglycerate + 2 H(+). Its function is as follows. RuBisCO catalyzes two reactions: the carboxylation of D-ribulose 1,5-bisphosphate, the primary event in carbon dioxide fixation, as well as the oxidative fragmentation of the pentose substrate in the photorespiration process. Both reactions occur simultaneously and in competition at the same active site. The polypeptide is Ribulose bisphosphate carboxylase large chain (Heliamphora nutans (Venezuelan marsh pitcher plant)).